The chain runs to 325 residues: Necdin (325 aa).

Disordered regions lie at residues 1–69 and 77–96; these read MSEQ…IEDV and AAEEGRAHQPQSPARPIPAP. One can recognise an MAGE domain in the interval 102–301; the sequence is LVQKAHELMW…QAWPSRYREA (200 aa).

As to quaternary structure, binds to the transactivation domains of E2F1 and p53. Binds also SV40 large T antigen and adenovirus E1A. Interacts with nucleobindin 1 and 2. In terms of tissue distribution, brain specific. Not detected in other tissues. Expressed in postmitotic neurons. In adult brain the highest expression is in hypothalamus. Highly expressed in thalamus and midbrain. Relatively low levels are in cerebral cortex, hippocampus, striatum, olfactory bulb, cerebellum, pons and spinal cord. Also detected in neurally differentiated embryonal carcinoma cells.

The protein resides in the cytoplasm. Its subcellular location is the nucleus. It localises to the nucleoplasm. The protein localises to the nucleus matrix. In terms of biological role, growth suppressor that facilitates the entry of the cell into cell cycle arrest. Functionally similar to the retinoblastoma protein it binds to and represses the activity of cell-cycle-promoting proteins such as SV40 large T antigen, adenovirus E1A, and the transcription factor E2F. Necdin also interacts with p53 and works in an additive manner to inhibit cell growth. Also functions as a transcription factor and directly binds to specific guanosine-rich DNA sequences. This chain is Necdin (Ndn), found in Mus musculus (Mouse).